A 146-amino-acid chain; its full sequence is Large ribosomal subunit protein uL11 (146 aa).

It belongs to the universal ribosomal protein uL11 family. Part of the ribosomal stalk of the 50S ribosomal subunit. Interacts with L10 and the large rRNA to form the base of the stalk. L10 forms an elongated spine to which L12 dimers bind in a sequential fashion forming a multimeric L10(L12)X complex. In terms of processing, one or more lysine residues are methylated.

Forms part of the ribosomal stalk which helps the ribosome interact with GTP-bound translation factors. This is Large ribosomal subunit protein uL11 from Buchnera aphidicola subsp. Baizongia pistaciae (strain Bp).